The primary structure comprises 1267 residues: MGTYRKRFNEKARSGHMAKLKELKRIRNKQFTRQDENDERVENPDSAPAESSTTEPNANAEILEPLTEEEKKMKKRKLQELFTPKESKVSRLKKKRLDKFIEHQLKREERKTIIGKLQDYKIDTSLLTSSKRLGEGRQTKKEEFKEALSLERQGRGNEQTNEILYEEYEPKVWDEYGEGGSSEDDDGEDDFEASFGSMPKPTDNEEKKSSGFIDHRPAKFGGSGLSFGFSNIKVINKESKTPKKKYNWRQRVEMEELKKHGKEDEMDFDTTSEDDDEEEDQEEEDKMHPSENPLEEVESADSETGSEKFDQNDVANEFKDWANQEIKKLEGRDQELVTPTLNIDYKPIIRKEDLDDGLQEAYVPINENSTRKAFYVEVSRSDEIQKARIQLPVFGEEHKIMEAIHHNDVVIICGETGSGKTTQVPQFLYEAGFGAEDSPDYPGMVGITQPRRVAAVSMAERVANELGDHGHKVGYQIRFDSTAKEDTKVKFMTDGVLLREMMHDFKLTKYSSIIIDEAHERNINTDILIGMLSRCVRLRAKLHKENPIEHKKLKLIIMSATLRVSDFSENKTLFPIAPPVLQVDARQFPVSIHFNRRTAFNYTDEAFRKTCKIHQKLPPGAILVFLTGQQEITHMVKRLRKEFPFKKNSKYNKDLETPVSKMGINSKTTDLEAEDIDFSVQVIDQDKFKSAIRYEEDEGNSGNGEDEEDEEEEGFEEVLTEGQTANDPLYVLPLYSLLPTKEQMRVFQKPPQGSRLCIVATNVAETSLTIPGVRYVVDSGRSKERKYNESNGVQSFEVGWVSKASANQRSGRAGRTGPGHCYRLYSSAVFEHDFEQFSKPEILRMPVESIVLQMKSMAIHNIINFPFPTPPDRVALSKAIQLLQYLGALDNKEMITEDGKKMSLFPLSPRFSKMLLVSDEKACLPYIVAIVSALSVGDPFINEFELGINEISRKPNPDENLDDKIREHDESTPGMDPELKKELRSKFYKSRSQFSKLDKFSDVFRLLSVVSAMDYVPKEQKEIFMKKNFLRGKLMEEIVKLRKQLMYIIKSNTSKENIAVVIRNEDLKSDIPSVIQIKLLKQMICAGFVDHVAVRADVLFPDDAKITNRTSIINIPYIPVLATRTPNIEDCFVYIHPTSILNNLGEMPPKYMLYYSLHLGGNNKTRMNTLCDIASTPLANIARKGLLLTYSKPLTGQGLKTVNLSPTERYCYVVPRFGSTVDNDLKIGWDLNPIAVHQKKQKGQWTVIKFITRKGFQTITGEEKEKK.

Disordered regions lie at residues 1–67, 168–233, and 255–313; these read MGTY…EPLT, YEPK…SNIK, and EELK…DQND. Basic and acidic residues-rich tracts occupy residues 7-25 and 32-43; these read RFNEKARSGHMAKLKELKR and TRQDENDERVEN. A compositionally biased stretch (acidic residues) spans 175–192; sequence EYGEGGSSEDDDGEDDFE. Serine 181 carries the phosphoserine modification. A compositionally biased stretch (basic and acidic residues) spans 202-217; sequence TDNEEKKSSGFIDHRP. Residues 264–284 show a composition bias toward acidic residues; the sequence is DEMDFDTTSEDDDEEEDQEEE. Residues 401 to 580 form the Helicase ATP-binding domain; it reads MEAIHHNDVV…KTLFPIAPPV (180 aa). Residue 414–421 coordinates ATP; that stretch reads GETGSGKT. The short motif at 516 to 519 is the DEAH box element; that stretch reads DEAH. One can recognise a Helicase C-terminal domain in the interval 675–858; it reads DIDFSVQVID…SIVLQMKSMA (184 aa). 2 disordered regions span residues 693-720 and 955-976; these read RYEEDEGNSGNGEDEEDEEEEGFEEVLT and PNPDENLDDKIREHDESTPGMD. Residues 695–719 show a composition bias toward acidic residues; it reads EEDEGNSGNGEDEEDEEEEGFEEVL.

The protein belongs to the DEAD box helicase family. DEAH subfamily. Interacts with snoRNA U3. Component of the ribosomal small subunit (SSU) processome composed of at least 40 protein subunits and snoRNA U3.

It localises to the nucleus. The protein localises to the nucleolus. The catalysed reaction is ATP + H2O = ADP + phosphate + H(+). In terms of biological role, probable ATP-binding RNA helicase. Required for 18S rRNA synthesis. May play a role in restructuring of the pre-rRNA. This is Probable ATP-dependent RNA helicase DHR1 (ECM16) from Saccharomyces cerevisiae (strain ATCC 204508 / S288c) (Baker's yeast).